Here is a 148-residue protein sequence, read N- to C-terminus: Small ribosomal subunit protein eS6 (148 aa).

Belongs to the eukaryotic ribosomal protein eS6 family.

This is Small ribosomal subunit protein eS6 from Pyrobaculum aerophilum (strain ATCC 51768 / DSM 7523 / JCM 9630 / CIP 104966 / NBRC 100827 / IM2).